A 308-amino-acid polypeptide reads, in one-letter code: Homeobox protein abdominal-A homolog (308 aa).

The segment at residues Arg-138 to Leu-197 is a DNA-binding region (homeobox). The segment covering Ala-207–Ser-221 has biased composition (basic and acidic residues). Positions Ala-207–His-277 are disordered. Positions Lys-223–Ser-247 are enriched in low complexity. Gly residues predominate over residues Asn-248–Gly-269.

It belongs to the Antp homeobox family.

It is found in the nucleus. Its function is as follows. Sequence-specific transcription factor which is part of a developmental regulatory system that provides cells with specific positional identities on the anterior-posterior axis. This chain is Homeobox protein abdominal-A homolog, found in Anopheles gambiae (African malaria mosquito).